Here is a 160-residue protein sequence, read N- to C-terminus: Urease accessory protein UreE (160 aa).

This sequence belongs to the UreE family.

The protein localises to the cytoplasm. Functionally, involved in urease metallocenter assembly. Binds nickel. Probably functions as a nickel donor during metallocenter assembly. The sequence is that of Urease accessory protein UreE from Acinetobacter baumannii (strain AB307-0294).